Here is a 113-residue protein sequence, read N- to C-terminus: U11-theraphotoxin-Hhn1n (113 aa).

Residues 1–21 (MNTVRVTFLLVFVLAVSLGQA) form the signal peptide. Residues 22–74 (DKDENRMEMQEKTEQGKSYLDFAENLLLQKLEELEAKLLEEDSEESRNSRQKR) constitute a propeptide that is removed on maturation. The span at 60–69 (LEEDSEESRN) shows a compositional bias: basic and acidic residues. Residues 60 to 83 (LEEDSEESRNSRQKRCIGEGVPCD) are disordered. 2 cysteine pairs are disulfide-bonded: cysteine 75-cysteine 90 and cysteine 89-cysteine 110.

The protein belongs to the neurotoxin 14 (magi-1) family. 01 (HNTX-16) subfamily. As to expression, expressed by the venom gland.

It localises to the secreted. Its function is as follows. Probable ion channel inhibitor. This Cyriopagopus hainanus (Chinese bird spider) protein is U11-theraphotoxin-Hhn1n.